A 104-amino-acid chain; its full sequence is N(4)-acetylcytidine amidohydrolase (104 aa).

The ASCH domain occupies 7 to 93 (MTFFSRFEAD…EVIQEIYPGI (87 aa)). Lysine 22 (proton acceptor) is an active-site residue. The Nucleophile role is filled by threonine 25. The active-site Proton donor is glutamate 75.

This sequence belongs to the N(4)-acetylcytidine amidohydrolase family.

The enzyme catalyses N(4)-acetylcytidine + H2O = cytidine + acetate + H(+). It catalyses the reaction N(4)-acetyl-2'-deoxycytidine + H2O = 2'-deoxycytidine + acetate + H(+). It carries out the reaction N(4)-acetylcytosine + H2O = cytosine + acetate + H(+). In terms of biological role, catalyzes the hydrolysis of N(4)-acetylcytidine (ac4C). The sequence is that of N(4)-acetylcytidine amidohydrolase from Vibrio vulnificus (strain CMCP6).